The chain runs to 249 residues: Transcription repressor MYB5 (249 aa).

HTH myb-type domains lie at 20–72 (KMGM…MNYL) and 73–127 (RPSV…RKKL). 2 DNA-binding regions (H-T-H motif) span residues 48–72 (WRSL…MNYL) and 100–123 (WSLI…NTHL). The tract at residues 133–180 (DPQTHKPLDANNIHKPEEEVSGGQKYPLEPISSSHTDDTTVNGGDGDS) is disordered. Over residues 135–150 (QTHKPLDANNIHKPEE) the composition is skewed to basic and acidic residues.

As to quaternary structure, interacts with BHLH002/EGL3/MYC146, BHLH012/MYC1 and BHLH042/TT8. As to expression, siliques.

It localises to the nucleus. Transcription activator, when associated with BHLH002/EGL3/MYC146, BHLH012/MYC1 or BHLH042/TT8. The sequence is that of Transcription repressor MYB5 (MYB5) from Arabidopsis thaliana (Mouse-ear cress).